Reading from the N-terminus, the 368-residue chain is Type 2 DNA topoisomerase 6 subunit A (368 aa).

The 140-residue stretch at 9–148 (PDTEEAREQL…FHMRPEESGA (140 aa)) folds into the Topo IIA-type catalytic domain. Tyrosine 103 acts as the O-(5'-phospho-DNA)-tyrosine intermediate in catalysis. Mg(2+)-binding residues include glutamate 201 and aspartate 253.

Belongs to the TOP6A family. Homodimer. Heterotetramer of two Top6A and two Top6B chains. The cofactor is Mg(2+).

The enzyme catalyses ATP-dependent breakage, passage and rejoining of double-stranded DNA.. Relaxes both positive and negative superturns and exhibits a strong decatenase activity. This Haloarcula marismortui (strain ATCC 43049 / DSM 3752 / JCM 8966 / VKM B-1809) (Halobacterium marismortui) protein is Type 2 DNA topoisomerase 6 subunit A.